A 310-amino-acid chain; its full sequence is 2-phospho-L-lactate transferase (310 aa).

Residues aspartate 50 and arginine 89 each contribute to the 7,8-didemethyl-8-hydroxy-5-deazariboflavin site.

It belongs to the CofD family. In terms of assembly, homodimer. It depends on Mg(2+) as a cofactor.

It carries out the reaction (2S)-lactyl-2-diphospho-5'-guanosine + 7,8-didemethyl-8-hydroxy-5-deazariboflavin = oxidized coenzyme F420-0 + GMP + H(+). It participates in cofactor biosynthesis; coenzyme F420 biosynthesis. Catalyzes the transfer of the 2-phospholactate moiety from (2S)-lactyl-2-diphospho-5'-guanosine to 7,8-didemethyl-8-hydroxy-5-deazariboflavin (FO) with the formation of oxidized coenzyme F420-0 and GMP. The chain is 2-phospho-L-lactate transferase from Methanopyrus kandleri (strain AV19 / DSM 6324 / JCM 9639 / NBRC 100938).